A 237-amino-acid polypeptide reads, in one-letter code: MLLLISPINHEEALESIKGGADIVDVKNPKEGSLGANFPWVIRDIREITPEDKLVSATLGDVPYKPGTVSLAAMGAHVSGADYIKVGLYGTKDYDEAVEVMENVAKTIKDVDNDTIVVASGYADAHRVGAVDPMEIPKVAKDAGCDLAMLDTAVKDGHTLFDYLSIEDLEKFVNEAHSYGLKTALAGSVKKEQLKPLNDIGCDVVGIRGAACVGGDRNTGKIHHTAVAELKELCDSF.

The Schiff-base intermediate with substrate role is filled by lysine 27. The active-site Proton acceptor is lysine 85.

The protein belongs to the MfnB family.

It carries out the reaction 2 D-glyceraldehyde 3-phosphate = 4-(hydroxymethyl)-2-furancarboxaldehyde phosphate + phosphate + 2 H2O. It functions in the pathway cofactor biosynthesis; methanofuran biosynthesis. Functionally, catalyzes the formation of 4-(hydroxymethyl)-2-furancarboxaldehyde phosphate (4-HFC-P) from two molecules of glyceraldehyde-3-P (GA-3-P). The sequence is that of (5-formylfuran-3-yl)methyl phosphate synthase from Methanobrevibacter smithii (strain ATCC 35061 / DSM 861 / OCM 144 / PS).